The primary structure comprises 247 residues: UPF0280 protein MmarC7_0482 (247 aa).

Belongs to the UPF0280 family.

The sequence is that of UPF0280 protein MmarC7_0482 from Methanococcus maripaludis (strain C7 / ATCC BAA-1331).